A 93-amino-acid chain; its full sequence is UPF0358 protein RBAM_014700 (93 aa).

This sequence belongs to the UPF0358 family.

This Bacillus velezensis (strain DSM 23117 / BGSC 10A6 / LMG 26770 / FZB42) (Bacillus amyloliquefaciens subsp. plantarum) protein is UPF0358 protein RBAM_014700.